A 588-amino-acid chain; its full sequence is Proline--tRNA ligase (588 aa).

It belongs to the class-II aminoacyl-tRNA synthetase family. ProS type 1 subfamily. In terms of assembly, homodimer.

The protein resides in the cytoplasm. It catalyses the reaction tRNA(Pro) + L-proline + ATP = L-prolyl-tRNA(Pro) + AMP + diphosphate. Its function is as follows. Catalyzes the attachment of proline to tRNA(Pro) in a two-step reaction: proline is first activated by ATP to form Pro-AMP and then transferred to the acceptor end of tRNA(Pro). As ProRS can inadvertently accommodate and process non-cognate amino acids such as alanine and cysteine, to avoid such errors it has two additional distinct editing activities against alanine. One activity is designated as 'pretransfer' editing and involves the tRNA(Pro)-independent hydrolysis of activated Ala-AMP. The other activity is designated 'posttransfer' editing and involves deacylation of mischarged Ala-tRNA(Pro). The misacylated Cys-tRNA(Pro) is not edited by ProRS. This chain is Proline--tRNA ligase, found in Helicobacter hepaticus (strain ATCC 51449 / 3B1).